Here is a 440-residue protein sequence, read N- to C-terminus: Transposon Ty1-DR2 Gag polyprotein (440 aa).

Composition is skewed to polar residues over residues 1–31 and 137–168; these read MESQ…TTQD and VGTH…TNQH. Disordered stretches follow at residues 1–75, 137–174, and 350–440; these read MESQ…PQAA, VGTH…PPPI, and QQES…PGTY. The interval 299–401 is RNA-binding; the sequence is NNGIPINNKV…NSQSRTARAH (103 aa). Residues 363 to 372 show a composition bias toward basic and acidic residues; it reads SPSDEKKDSR. A compositionally biased stretch (polar residues) spans 373-409; it reads TYTNTTKPKSITRNSQKPNNSQSRTARAHNVSTSNNF. Residues 429-440 show a composition bias toward basic and acidic residues; the sequence is NKHDLHLRPGTY.

As to quaternary structure, homotrimer.

Its subcellular location is the cytoplasm. Its function is as follows. Capsid protein (CA) is the structural component of the virus-like particle (VLP), forming the shell that encapsulates the retrotransposons dimeric RNA genome. The particles are assembled from trimer-clustered units and there are holes in the capsid shells that allow for the diffusion of macromolecules. CA also has nucleocapsid-like chaperone activity, promoting primer tRNA(i)-Met annealing to the multipartite primer-binding site (PBS), dimerization of Ty1 RNA and initiation of reverse transcription. The polypeptide is Transposon Ty1-DR2 Gag polyprotein (TY1A-DR2) (Saccharomyces cerevisiae (strain ATCC 204508 / S288c) (Baker's yeast)).